Here is a 407-residue protein sequence, read N- to C-terminus: Chorismate synthase (407 aa).

Positions 40 and 46 each coordinate NADP(+). FMN contacts are provided by residues 140–142 (RSS), 261–262 (QA), Gly-305, 320–324 (KPIST), and Arg-346.

Belongs to the chorismate synthase family. Homotetramer. It depends on FMNH2 as a cofactor.

The enzyme catalyses 5-O-(1-carboxyvinyl)-3-phosphoshikimate = chorismate + phosphate. Its pathway is metabolic intermediate biosynthesis; chorismate biosynthesis; chorismate from D-erythrose 4-phosphate and phosphoenolpyruvate: step 7/7. Catalyzes the anti-1,4-elimination of the C-3 phosphate and the C-6 proR hydrogen from 5-enolpyruvylshikimate-3-phosphate (EPSP) to yield chorismate, which is the branch point compound that serves as the starting substrate for the three terminal pathways of aromatic amino acid biosynthesis. This reaction introduces a second double bond into the aromatic ring system. This is Chorismate synthase from Corynebacterium glutamicum (strain R).